We begin with the raw amino-acid sequence, 317 residues long: Beta-ketoacyl-[acyl-carrier-protein] synthase III (317 aa).

Catalysis depends on residues Cys112 and His244. The ACP-binding stretch occupies residues 245–249 (QANLR). The active site involves Asn274.

This sequence belongs to the thiolase-like superfamily. FabH family. Homodimer.

It is found in the cytoplasm. The enzyme catalyses malonyl-[ACP] + acetyl-CoA + H(+) = 3-oxobutanoyl-[ACP] + CO2 + CoA. Its pathway is lipid metabolism; fatty acid biosynthesis. Its function is as follows. Catalyzes the condensation reaction of fatty acid synthesis by the addition to an acyl acceptor of two carbons from malonyl-ACP. Catalyzes the first condensation reaction which initiates fatty acid synthesis and may therefore play a role in governing the total rate of fatty acid production. Possesses both acetoacetyl-ACP synthase and acetyl transacylase activities. Its substrate specificity determines the biosynthesis of branched-chain and/or straight-chain of fatty acids. The chain is Beta-ketoacyl-[acyl-carrier-protein] synthase III from Shigella sonnei (strain Ss046).